The following is a 314-amino-acid chain: 2-oxo-3-(phosphooxy)propyl 3-oxoalkanoate synthase (314 aa).

It belongs to the AfsA family.

It carries out the reaction a medium-chain 3-oxoacyl-[ACP] + dihydroxyacetone phosphate = a (4-alkanoyl-5-oxo-2,5-dihydrofuran-3-yl)methyl phosphate + holo-[ACP] + H2O. Involved of the biosynthesis of S.coelicolor butanolide 1 (SCB1), a gamma-butyrolactone that triggers antibiotic production. The sequence is that of 2-oxo-3-(phosphooxy)propyl 3-oxoalkanoate synthase from Streptomyces coelicolor (strain ATCC BAA-471 / A3(2) / M145).